The chain runs to 457 residues: Argininosuccinate lyase (457 aa).

The protein belongs to the lyase 1 family. Argininosuccinate lyase subfamily.

It localises to the cytoplasm. It catalyses the reaction 2-(N(omega)-L-arginino)succinate = fumarate + L-arginine. The protein operates within amino-acid biosynthesis; L-arginine biosynthesis; L-arginine from L-ornithine and carbamoyl phosphate: step 3/3. This chain is Argininosuccinate lyase, found in Pectobacterium atrosepticum (strain SCRI 1043 / ATCC BAA-672) (Erwinia carotovora subsp. atroseptica).